The following is a 291-amino-acid chain: Bifunctional protein FolD (291 aa).

Residues 173–175 (GRS) and Ser198 contribute to the NADP(+) site.

The protein belongs to the tetrahydrofolate dehydrogenase/cyclohydrolase family. In terms of assembly, homodimer.

It carries out the reaction (6R)-5,10-methylene-5,6,7,8-tetrahydrofolate + NADP(+) = (6R)-5,10-methenyltetrahydrofolate + NADPH. The catalysed reaction is (6R)-5,10-methenyltetrahydrofolate + H2O = (6R)-10-formyltetrahydrofolate + H(+). Its pathway is one-carbon metabolism; tetrahydrofolate interconversion. Catalyzes the oxidation of 5,10-methylenetetrahydrofolate to 5,10-methenyltetrahydrofolate and then the hydrolysis of 5,10-methenyltetrahydrofolate to 10-formyltetrahydrofolate. The sequence is that of Bifunctional protein FolD from Psychrobacter sp. (strain PRwf-1).